Consider the following 708-residue polypeptide: Pre-mRNA-splicing factor SPP382 (708 aa).

Residues 61–108 enclose the G-patch domain; it reads TYGIGAKLLSSMGYVAGKGLGKDGSGITTPIETQSRPMHNAGLGMFSN.

In terms of assembly, component of the NTR complex (NTC-related complex), composed of NTR1, NTR2 and PRP43. Interacts with CLF1 and NTR2. Interacts with PRP43 and PRP45.

The protein localises to the cytoplasm. It is found in the nucleus. Its function is as follows. Involved in pre-mRNA splicing and spliceosome disassembly. Promotes release of excised lariat intron from the spliceosome by acting as a receptor for PRP43. This targeting of PRP43 leads to disassembly of the spliceosome with the separation of the U2, U5, U6 snRNPs and the NTC complex. In Saccharomyces cerevisiae (strain ATCC 204508 / S288c) (Baker's yeast), this protein is Pre-mRNA-splicing factor SPP382 (SPP382).